The sequence spans 812 residues: Phospholipase D alpha 1 (812 aa).

Residues 1 to 130 enclose the C2 domain; sequence MAQILLHGTL…LGGEEIDKWL (130 aa). D190 contributes to the Ca(2+) binding site. The PLD phosphodiesterase 1 domain occupies 330-368; sequence TMFTHHQKIVVVDHEMPNQGSQQRRIVSFIGGIDLCDGR. Residues H335, K337, and D342 contribute to the active site. Residue H335 participates in a 1,2-diacyl-sn-glycero-3-phosphate binding. Residues H374 and H408 each coordinate Ca(2+). 2 residues coordinate a 1,2-diacyl-sn-glycero-3-phosphate: Q524 and H663. The 28-residue stretch at 658–685 folds into the PLD phosphodiesterase 2 domain; the sequence is FMIYVHTKMMIVDDEYIIIGSANINQRS. Catalysis depends on residues H663, K665, and D670. Residue E724 participates in Ca(2+) binding.

It belongs to the phospholipase D family. C2-PLD subfamily. Monomer. It depends on Ca(2+) as a cofactor.

It catalyses the reaction a 1,2-diacyl-sn-glycero-3-phosphocholine + H2O = a 1,2-diacyl-sn-glycero-3-phosphate + choline + H(+). Functionally, hydrolyzes glycerol-phospholipids at the terminal phosphodiesteric bond. Plays an important role in various cellular processes. The polypeptide is Phospholipase D alpha 1 (PLD1) (Zea mays (Maize)).